The primary structure comprises 268 residues: Proenkephalin-A (268 aa).

The signal sequence occupies residues 1–24 (MARLLRLCTWLVALGPGLLATVQA). 3 disulfides stabilise this stretch: Cys-26/Cys-48, Cys-30/Cys-52, and Cys-33/Cys-65. Positions 163–184 (TGDDRDRENHHQEGGDSDEGVS) are disordered. Basic and acidic residues predominate over residues 164–176 (GDDRDRENHHQEG). 2 consecutive propeptides follow at residues 197-208 (SPQVEDEAKELQ) and 218-228 (VGRPEWWMDYQ). Residue Ser-252 is modified to Phosphoserine.

The protein belongs to the opioid neuropeptide precursor family. In terms of processing, proenkephalin-A is cleaved by CTSL to generate Met-enkephalin. Processed and degraded by ACE. Post-translationally, probably cleaved by ACE. In terms of processing, processed by ACE to generate Met-enkephalin in the nucleus accumbens of the brain. The N-terminal domain contains 6 conserved cysteines thought to be involved in disulfide bonding and/or processing.

It localises to the cytoplasmic vesicle. It is found in the secretory vesicle. The protein resides in the chromaffin granule lumen. The protein localises to the secreted. Neuropeptide that competes with and mimic the effects of opiate drugs. They play a role in a number of physiologic functions, including pain perception and responses to stress. In terms of biological role, met-enkephalin-Arg-Phe neuropeptide acts as a strong ligand of Mu-type opioid receptor OPRM1. Met-enkephalin-Arg-Phe-binding to OPRM1 in the nucleus accumbens of the brain increases activation of OPRM1, leading to long-term synaptic depression of glutamate release. Its function is as follows. Increases glutamate release in the striatum and decreases GABA concentration in the striatum. Functionally, increases glutamate release in the striatum. This Cavia porcellus (Guinea pig) protein is Proenkephalin-A (PENK).